The chain runs to 43 residues: Protein PsbN (43 aa).

Residues 5-27 (TLVAIFISGSLVSFTGYALYTAF) form a helical membrane-spanning segment.

Belongs to the PsbN family.

It is found in the plastid. Its subcellular location is the chloroplast thylakoid membrane. In terms of biological role, may play a role in photosystem I and II biogenesis. This Nelumbo lutea (American lotus) protein is Protein PsbN.